We begin with the raw amino-acid sequence, 188 residues long: MASTNDLKNGLVLKLDGGQLWSVVEFQHVKPGKGPAFVRTKLKNVLSGKVVDKTFNAGVKVETATIDKRDMQFSYMDGEYFVFMDMDTYDQLMVDRKSVGDAANFLIEGFTATVAQHEGEVLFVELPAAVELVIQETEPGVQGDRSTGGTKPATLETGHQIQVPLFITTGEKIKVDTRTSDYLGRVNS.

Belongs to the elongation factor P family.

It is found in the cytoplasm. The protein operates within protein biosynthesis; polypeptide chain elongation. In terms of biological role, involved in peptide bond synthesis. Stimulates efficient translation and peptide-bond synthesis on native or reconstituted 70S ribosomes in vitro. Probably functions indirectly by altering the affinity of the ribosome for aminoacyl-tRNA, thus increasing their reactivity as acceptors for peptidyl transferase. In Streptomyces avermitilis (strain ATCC 31267 / DSM 46492 / JCM 5070 / NBRC 14893 / NCIMB 12804 / NRRL 8165 / MA-4680), this protein is Elongation factor P.